The chain runs to 346 residues: Elongation factor 1-alpha (346 aa).

A tr-type G domain is found at 1–127 (GTSQADVALL…DNVEPPKRPS (127 aa)). Position 49–52 (49–52 (NKMD)) interacts with GTP.

The protein belongs to the TRAFAC class translation factor GTPase superfamily. Classic translation factor GTPase family. EF-Tu/EF-1A subfamily.

It localises to the cytoplasm. This protein promotes the GTP-dependent binding of aminoacyl-tRNA to the A-site of ribosomes during protein biosynthesis. This chain is Elongation factor 1-alpha, found in Eimeria bovis.